A 724-amino-acid chain; its full sequence is Putative methyltransferase NSUN7 (724 aa).

The Nucleophile role is filled by Cys-444. Disordered regions lie at residues 542-574 (KTLK…LAVD), 595-629 (ISTS…TPLV), and 698-724 (TSST…RPWL). Residues 543-554 (TLKRDKKRKKSK) show a composition bias toward basic residues. Over residues 562–572 (HHGDPLRDHLA) the composition is skewed to basic and acidic residues. The segment covering 595–618 (ISTSTKMSAPAKTVSQAGTSSQVR) has biased composition (polar residues).

Belongs to the class I-like SAM-binding methyltransferase superfamily. RsmB/NOP family. Expressed in testis.

In terms of biological role, may have S-adenosyl-L-methionine-dependent methyl-transferase activity. This Mus musculus (Mouse) protein is Putative methyltransferase NSUN7 (Nsun7).